A 911-amino-acid chain; its full sequence is Epithelial discoidin domain-containing receptor 1 (911 aa).

The N-terminal stretch at 1–19 is a signal peptide; that stretch reads MGTGTLSSLLLLLLLVTIG. Topologically, residues 22–415 are extracellular; it reads DMKGHFDPAK…VAKAEGSPTA (394 aa). An F5/8 type C domain is found at 32–186; it reads CRYALGMQDR…VCLRVELYGC (155 aa). Cystine bridges form between C32–C186 and C75–C178. A DS-like domain region spans residues 193–369; sequence LSYTAPVGQT…LFSEISFISD (177 aa). Ca(2+) contacts are provided by N213, Q232, D235, V237, Y255, and Y257. A glycan (N-linked (GlcNAc...) asparagine) is linked at N213. N-linked (GlcNAc...) asparagine glycosylation is present at N262. Cysteines 305 and 350 form a disulfide. Ca(2+) contacts are provided by S362 and E363. Residues N372 and N392 are each glycosylated (N-linked (GlcNAc...) asparagine). The chain crosses the membrane as a helical span at residues 416–436; the sequence is ILIGCLVAIILLLLLIIALML. At 437-911 the chain is on the cytoplasmic side; that stretch reads WRLHWRRLLS…FLADDALNTV (475 aa). The interval 468–496 is disordered; it reads ILINNRPGPREPPPYQEPRPRGTPPHSAP. Residues 477-494 are compositionally biased toward pro residues; that stretch reads REPPPYQEPRPRGTPPHS. A PPxY motif motif is present at residues 479-482; that stretch reads PPPY. Phosphotyrosine; by autocatalysis occurs at positions 482, 511, and 518. A Protein kinase domain is found at 608–903; sequence LRFKEKLGEG…PPFAQLHRFL (296 aa). Residues 614 to 622 and K653 contribute to the ATP site; that span reads LGEGQFGEV. Y738 bears the Phosphotyrosine; by autocatalysis mark. D764 serves as the catalytic Proton acceptor. Y790, Y794, and Y795 each carry phosphotyrosine; by autocatalysis.

The protein belongs to the protein kinase superfamily. Tyr protein kinase family. Insulin receptor subfamily. In terms of assembly, homodimer. Interacts (via PPxY motif) with WWC1 (via WW domains) in a collagen-regulated manner. Forms a tripartite complex with WWC1 and PRKCZ, but predominantly in the absence of collagen. Interacts (tyrosine phosphorylated) with SHC1. Interacts with SRC. Interacts with MYH9. Interacts with CDH1. Interacts with PTPN11. Interacts with NCK2. Autophosphorylated in response to fibrillar collagen binding. In terms of tissue distribution, detected in the cochlea and the organ of Corti in the inner ear. Isoform 1 is predominant and is expressed in developing embryo and adult brain. Isoform 2 is expressed in various epithelial cells.

Its subcellular location is the cell membrane. It catalyses the reaction L-tyrosyl-[protein] + ATP = O-phospho-L-tyrosyl-[protein] + ADP + H(+). Tyrosine kinase that functions as a cell surface receptor for fibrillar collagen and regulates cell attachment to the extracellular matrix, remodeling of the extracellular matrix, cell migration, differentiation, survival and cell proliferation. Collagen binding triggers a signaling pathway that involves SRC and leads to the activation of MAP kinases. Regulates remodeling of the extracellular matrix by up-regulation of the matrix metalloproteinases MMP2, MMP7 and MMP9, and thereby facilitates cell migration and wound healing, but also tumor cell invasion. Promotes smooth muscle cell migration, and thereby contributes to arterial wound healing. Phosphorylates PTPN11. Required for normal blastocyst implantation during pregnancy, for normal mammary gland differentiation and normal lactation. Required for normal ear morphology and normal hearing. The chain is Epithelial discoidin domain-containing receptor 1 (Ddr1) from Mus musculus (Mouse).